A 196-amino-acid chain; its full sequence is Ribonuclease HII (196 aa).

The RNase H type-2 domain maps to glycine 9–leucine 196. A divalent metal cation is bound by residues aspartate 15, glutamate 16, and aspartate 107.

The protein belongs to the RNase HII family. It depends on Mn(2+) as a cofactor. Requires Mg(2+) as cofactor.

It localises to the cytoplasm. It carries out the reaction Endonucleolytic cleavage to 5'-phosphomonoester.. Endonuclease that specifically degrades the RNA of RNA-DNA hybrids. This Dechloromonas aromatica (strain RCB) protein is Ribonuclease HII.